The primary structure comprises 278 residues: Sulfate transport system permease protein CysT (278 aa).

7 helical membrane-spanning segments follow: residues 22–42 (FTWV…FLKS), 67–87 (FGLS…IAWV), 102–122 (FIDL…ATVY), 139–159 (IAFT…PFVV), 188–208 (FWRV…AQGF), 217–237 (SVVI…VLIF), and 246–266 (AGAT…LFVI). Residues 63 to 266 (YEVTFGLSLA…LFSLVILFVI (204 aa)) enclose the ABC transmembrane type-1 domain.

This sequence belongs to the binding-protein-dependent transport system permease family. CysTW subfamily. As to quaternary structure, the complex is composed of two ATP-binding proteins (CysA), two transmembrane proteins (CysT and CysW) and a solute-binding protein (CysP).

Its subcellular location is the cell inner membrane. Part of the ABC transporter complex CysAWTP (TC 3.A.1.6.1) involved in sulfate/thiosulfate import. Probably responsible for the translocation of the substrate across the membrane. In Synechococcus elongatus (strain ATCC 33912 / PCC 7942 / FACHB-805) (Anacystis nidulans R2), this protein is Sulfate transport system permease protein CysT (cysT).